The primary structure comprises 693 residues: Elongation factor G (693 aa).

A tr-type G domain is found at 8–282 (EKTRNIGIMA…AVIDYLPSPL (275 aa)). Residues 17 to 24 (AHVDAGKT), 81 to 85 (DTPGH), and 135 to 138 (NKMD) each bind GTP.

The protein belongs to the TRAFAC class translation factor GTPase superfamily. Classic translation factor GTPase family. EF-G/EF-2 subfamily.

It is found in the cytoplasm. Functionally, catalyzes the GTP-dependent ribosomal translocation step during translation elongation. During this step, the ribosome changes from the pre-translocational (PRE) to the post-translocational (POST) state as the newly formed A-site-bound peptidyl-tRNA and P-site-bound deacylated tRNA move to the P and E sites, respectively. Catalyzes the coordinated movement of the two tRNA molecules, the mRNA and conformational changes in the ribosome. This Streptococcus pneumoniae (strain P1031) protein is Elongation factor G.